The primary structure comprises 276 residues: ARL14 effector protein (276 aa).

Residues 159–183 are disordered; sequence QTEFAPESGKREKRKLTKNASASSD. Residue Lys-176 forms a Glycyl lysine isopeptide (Lys-Gly) (interchain with G-Cter in SUMO2) linkage. Phosphoserine is present on residues Ser-182 and Ser-266.

Interacts with ARL14 and MYO1E.

The protein localises to the cytoplasm. Through its interaction with ARL14 and MYO1E, may connect MHC class II-containing cytoplasmic vesicles to the actin network and hence controls the movement of these vesicles along the actin cytoskeleton in dendritic cells. The protein is ARL14 effector protein (Arl14ep) of Rattus norvegicus (Rat).